The chain runs to 235 residues: Small ribosomal subunit protein uS2 (235 aa).

It belongs to the universal ribosomal protein uS2 family.

This Anoxybacillus flavithermus (strain DSM 21510 / WK1) protein is Small ribosomal subunit protein uS2.